The sequence spans 484 residues: Probable cytosol aminopeptidase (484 aa).

Positions 256 and 261 each coordinate Mn(2+). Residue Lys-268 is part of the active site. The Mn(2+) site is built by Asp-279, Asp-338, and Glu-340. Arg-342 is a catalytic residue.

This sequence belongs to the peptidase M17 family. The cofactor is Mn(2+).

Its subcellular location is the cytoplasm. The enzyme catalyses Release of an N-terminal amino acid, Xaa-|-Yaa-, in which Xaa is preferably Leu, but may be other amino acids including Pro although not Arg or Lys, and Yaa may be Pro. Amino acid amides and methyl esters are also readily hydrolyzed, but rates on arylamides are exceedingly low.. It catalyses the reaction Release of an N-terminal amino acid, preferentially leucine, but not glutamic or aspartic acids.. Functionally, presumably involved in the processing and regular turnover of intracellular proteins. Catalyzes the removal of unsubstituted N-terminal amino acids from various peptides. The protein is Probable cytosol aminopeptidase of Methylibium petroleiphilum (strain ATCC BAA-1232 / LMG 22953 / PM1).